A 146-amino-acid polypeptide reads, in one-letter code: UPF0260 protein VF_1660 (146 aa).

It belongs to the UPF0260 family.

The chain is UPF0260 protein VF_1660 from Aliivibrio fischeri (strain ATCC 700601 / ES114) (Vibrio fischeri).